Reading from the N-terminus, the 83-residue chain is Small ribosomal subunit protein uS17 (83 aa).

This sequence belongs to the universal ribosomal protein uS17 family. As to quaternary structure, part of the 30S ribosomal subunit.

One of the primary rRNA binding proteins, it binds specifically to the 5'-end of 16S ribosomal RNA. The sequence is that of Small ribosomal subunit protein uS17 from Ehrlichia canis (strain Jake).